A 475-amino-acid chain; its full sequence is Ribosomal protein uS12 methylthiotransferase RimO (475 aa).

The region spanning 36–150 is the MTTase N-terminal domain; the sequence is NKINFISLGC…ILKAVQSTQK (115 aa). 6 residues coordinate [4Fe-4S] cluster: cysteine 45, cysteine 81, cysteine 113, cysteine 185, cysteine 189, and cysteine 192. The Radical SAM core domain occupies 171–403; the sequence is STPKHYAYLK…MQVQKKVVKK (233 aa). A TRAM domain is found at 406-475; it reads KKMIGKKIAV…ADYDLVGHVI (70 aa).

It belongs to the methylthiotransferase family. RimO subfamily. Requires [4Fe-4S] cluster as cofactor.

The protein localises to the cytoplasm. It carries out the reaction L-aspartate(89)-[ribosomal protein uS12]-hydrogen + (sulfur carrier)-SH + AH2 + 2 S-adenosyl-L-methionine = 3-methylsulfanyl-L-aspartate(89)-[ribosomal protein uS12]-hydrogen + (sulfur carrier)-H + 5'-deoxyadenosine + L-methionine + A + S-adenosyl-L-homocysteine + 2 H(+). Its function is as follows. Catalyzes the methylthiolation of an aspartic acid residue of ribosomal protein uS12. The protein is Ribosomal protein uS12 methylthiotransferase RimO of Protochlamydia amoebophila (strain UWE25).